The sequence spans 175 residues: Large ribosomal subunit protein uL5 (175 aa).

It belongs to the universal ribosomal protein uL5 family. In terms of assembly, part of the 50S ribosomal subunit; contacts the 5S rRNA and probably tRNA. Forms a bridge to the 30S subunit in the 70S ribosome.

Functionally, this is one of the proteins that bind and probably mediate the attachment of the 5S RNA into the large ribosomal subunit, where it forms part of the central protuberance. In the 70S ribosome it contacts protein S13 of the 30S subunit (bridge B1b), connecting the 2 subunits; this bridge is implicated in subunit movement. May contact the P site tRNA; the 5S rRNA and some of its associated proteins might help stabilize positioning of ribosome-bound tRNAs. This is Large ribosomal subunit protein uL5 from Halobacterium salinarum (strain ATCC 29341 / DSM 671 / R1).